A 207-amino-acid chain; its full sequence is Guanylate kinase (207 aa).

The 179-residue stretch at 7-185 (GIVLVLCAPS…AYDELRAAYI (179 aa)) folds into the Guanylate kinase-like domain. 14-21 (APSGTGKT) contributes to the ATP binding site.

The protein belongs to the guanylate kinase family.

The protein localises to the cytoplasm. It carries out the reaction GMP + ATP = GDP + ADP. Essential for recycling GMP and indirectly, cGMP. The polypeptide is Guanylate kinase (Nitratidesulfovibrio vulgaris (strain ATCC 29579 / DSM 644 / CCUG 34227 / NCIMB 8303 / VKM B-1760 / Hildenborough) (Desulfovibrio vulgaris)).